The chain runs to 245 residues: Farnesol dehydrogenase (245 aa).

Residues 11–40 (VTGA…ARRV) and aspartate 64 each bind NAD(+). Residue serine 145 participates in substrate binding. Tyrosine 160 serves as the catalytic Proton acceptor. Lysine 164 is an NAD(+) binding site.

It belongs to the short-chain dehydrogenases/reductases (SDR) family. As to quaternary structure, homodimer. In terms of tissue distribution, highly expressed level in the midgut and brain in adult females, and at lower level in the abdominal and thoracic ganglia. High levels are detected in corpora allata (CA), Malpighian tubules and fat body.

The enzyme catalyses (2E,6E)-farnesol + NADP(+) = (2E,6E)-farnesal + NADPH + H(+). Mediates oxidation of farnesol into farnesal, a precursor of juvenile hormone in the corpora allata (CA), the glands that synthesize juvenile hormone. Able to oxidize C(10) to C(15) isoprenoid and aliphatic alcohols. This Aedes aegypti (Yellowfever mosquito) protein is Farnesol dehydrogenase.